A 103-amino-acid chain; its full sequence is Co-chaperonin GroES (103 aa).

This sequence belongs to the GroES chaperonin family. Heptamer of 7 subunits arranged in a ring. Interacts with the chaperonin GroEL.

The protein localises to the cytoplasm. In terms of biological role, together with the chaperonin GroEL, plays an essential role in assisting protein folding. The GroEL-GroES system forms a nano-cage that allows encapsulation of the non-native substrate proteins and provides a physical environment optimized to promote and accelerate protein folding. GroES binds to the apical surface of the GroEL ring, thereby capping the opening of the GroEL channel. This chain is Co-chaperonin GroES, found in Prochlorococcus marinus (strain MIT 9313).